The chain runs to 230 residues: Large ribosomal subunit protein uL1 (230 aa).

The protein belongs to the universal ribosomal protein uL1 family. In terms of assembly, part of the 50S ribosomal subunit.

Its function is as follows. Binds directly to 23S rRNA. The L1 stalk is quite mobile in the ribosome, and is involved in E site tRNA release. Protein L1 is also a translational repressor protein, it controls the translation of the L11 operon by binding to its mRNA. The sequence is that of Large ribosomal subunit protein uL1 from Bacillus mycoides (strain KBAB4) (Bacillus weihenstephanensis).